The primary structure comprises 124 residues: Small ribosomal subunit protein uS12 (124 aa).

The disordered stretch occupies residues 1 to 28 (MPTISQLIGSERKRLTRKTKSPALKSCP). Asp89 bears the 3-methylthioaspartic acid mark. A disordered region spans residues 104 to 124 (TAGVKDRRQSRSKYGAKAPKD).

This sequence belongs to the universal ribosomal protein uS12 family. Part of the 30S ribosomal subunit. Contacts proteins S8 and S17. May interact with IF1 in the 30S initiation complex.

With S4 and S5 plays an important role in translational accuracy. In terms of biological role, interacts with and stabilizes bases of the 16S rRNA that are involved in tRNA selection in the A site and with the mRNA backbone. Located at the interface of the 30S and 50S subunits, it traverses the body of the 30S subunit contacting proteins on the other side and probably holding the rRNA structure together. The combined cluster of proteins S8, S12 and S17 appears to hold together the shoulder and platform of the 30S subunit. The sequence is that of Small ribosomal subunit protein uS12 from Prochlorococcus marinus (strain MIT 9312).